The chain runs to 947 residues: Bifunctional glutamine synthetase adenylyltransferase/adenylyl-removing enzyme (947 aa).

Positions Met1 to Glu440 are adenylyl removase. The interval Ser450–Val947 is adenylyl transferase.

Belongs to the GlnE family. Mg(2+) serves as cofactor.

It carries out the reaction [glutamine synthetase]-O(4)-(5'-adenylyl)-L-tyrosine + phosphate = [glutamine synthetase]-L-tyrosine + ADP. The enzyme catalyses [glutamine synthetase]-L-tyrosine + ATP = [glutamine synthetase]-O(4)-(5'-adenylyl)-L-tyrosine + diphosphate. Functionally, involved in the regulation of glutamine synthetase GlnA, a key enzyme in the process to assimilate ammonia. When cellular nitrogen levels are high, the C-terminal adenylyl transferase (AT) inactivates GlnA by covalent transfer of an adenylyl group from ATP to specific tyrosine residue of GlnA, thus reducing its activity. Conversely, when nitrogen levels are low, the N-terminal adenylyl removase (AR) activates GlnA by removing the adenylyl group by phosphorolysis, increasing its activity. The regulatory region of GlnE binds the signal transduction protein PII (GlnB) which indicates the nitrogen status of the cell. The protein is Bifunctional glutamine synthetase adenylyltransferase/adenylyl-removing enzyme of Salmonella arizonae (strain ATCC BAA-731 / CDC346-86 / RSK2980).